The sequence spans 106 residues: NADH dehydrogenase [ubiquinone] iron-sulfur protein 5 (106 aa).

The CHCH domain occupies 30–74 (APRCHAFEKEWIECAHGIGAIRAEKECKIEYDDFIECLLRQKTMR). Short sequence motifs (cx9C motif) lie at residues 33–43 (CHAFEKEWIEC) and 56–66 (CKIEYDDFIEC). 2 disulfides stabilise this stretch: Cys-33/Cys-66 and Cys-43/Cys-56. Residues 87-106 (IKEGKYTPPPHHIGKGEPRP) are disordered.

The protein belongs to the complex I NDUFS5 subunit family. In terms of assembly, mammalian complex I is composed of 45 different subunits. This is a component of the iron-sulfur (IP) fragment of the enzyme.

It localises to the mitochondrion inner membrane. The protein resides in the mitochondrion intermembrane space. In terms of biological role, accessory subunit of the mitochondrial membrane respiratory chain NADH dehydrogenase (Complex I), that is believed not to be involved in catalysis. Complex I functions in the transfer of electrons from NADH to the respiratory chain. The immediate electron acceptor for the enzyme is believed to be ubiquinone. This is NADH dehydrogenase [ubiquinone] iron-sulfur protein 5 (NDUFS5) from Macaca fascicularis (Crab-eating macaque).